We begin with the raw amino-acid sequence, 394 residues long: Homoserine O-succinyltransferase (394 aa).

An AB hydrolase-1 domain is found at 54 to 368 (NAVLICHALS…SSPAGHDAFL (315 aa)). S160 (nucleophile) is an active-site residue. R236 contributes to the substrate binding site. Active-site residues include D331 and H364. A substrate-binding site is contributed by D365.

This sequence belongs to the AB hydrolase superfamily. MetX family. In terms of assembly, homodimer.

The protein localises to the cytoplasm. The enzyme catalyses L-homoserine + succinyl-CoA = O-succinyl-L-homoserine + CoA. Its pathway is amino-acid biosynthesis; L-methionine biosynthesis via de novo pathway; O-succinyl-L-homoserine from L-homoserine: step 1/1. In terms of biological role, transfers a succinyl group from succinyl-CoA to L-homoserine, forming succinyl-L-homoserine. This Magnetococcus marinus (strain ATCC BAA-1437 / JCM 17883 / MC-1) protein is Homoserine O-succinyltransferase.